A 937-amino-acid polypeptide reads, in one-letter code: Periplasmic nitrate reductase (937 aa).

The tat-type signal signal peptide spans 1–31 (MSMNRREFLKTTAAAAAASAVGISIPSEAKA). The 4Fe-4S Mo/W bis-MGD-type domain occupies 40 to 96 (WQWDKAVCRFCGTGCGIMVAVKDDKIVAVKGDPESPVNRGINCIKGYFNAKIMYGAD). C47, C50, C54, and C82 together coordinate [4Fe-4S] cluster. Mo-bis(molybdopterin guanine dinucleotide) contacts are provided by residues K84, Q152, N177, C181, 214-221 (WGANMAEM), M422, Q426, N532, K580, D607, and 827-836 (TGRVLEHWHS). W903 contacts substrate. Mo-bis(molybdopterin guanine dinucleotide)-binding residues include N911 and K928.

It belongs to the prokaryotic molybdopterin-containing oxidoreductase family. NasA/NapA/NarB subfamily. Component of the periplasmic nitrate reductase NapAB complex composed of NapA and NapB. It depends on [4Fe-4S] cluster as a cofactor. Mo-bis(molybdopterin guanine dinucleotide) serves as cofactor. Post-translationally, predicted to be exported by the Tat system. The position of the signal peptide cleavage has not been experimentally proven.

It is found in the periplasm. The enzyme catalyses 2 Fe(II)-[cytochrome] + nitrate + 2 H(+) = 2 Fe(III)-[cytochrome] + nitrite + H2O. Catalytic subunit of the periplasmic nitrate reductase complex NapAB. Receives electrons from NapB and catalyzes the reduction of nitrate to nitrite. This chain is Periplasmic nitrate reductase, found in Nautilia profundicola (strain ATCC BAA-1463 / DSM 18972 / AmH).